We begin with the raw amino-acid sequence, 122 residues long: Large ribosomal subunit protein uL14c (122 aa).

The protein belongs to the universal ribosomal protein uL14 family. As to quaternary structure, part of the 50S ribosomal subunit.

The protein localises to the plastid. Binds to 23S rRNA. This Cuscuta obtusiflora (Peruvian dodder) protein is Large ribosomal subunit protein uL14c.